We begin with the raw amino-acid sequence, 442 residues long: Probable alpha-galactosidase B (442 aa).

The N-terminal stretch at 1–19 (MQRYISLSVSLSLLSGANA) is a signal peptide. Intrachain disulfides connect cysteine 42-cysteine 74 and cysteine 124-cysteine 154. Residue aspartate 152 is the Nucleophile of the active site. N-linked (GlcNAc...) asparagine glycans are attached at residues asparagine 159, asparagine 173, asparagine 179, and asparagine 215. 224 to 228 (EWGQA) provides a ligand contact to substrate. N-linked (GlcNAc...) asparagine glycosylation is present at asparagine 235. The active-site Proton donor is the aspartate 246. N-linked (GlcNAc...) asparagine glycosylation is present at asparagine 285.

The protein belongs to the glycosyl hydrolase 27 family.

The protein resides in the secreted. It catalyses the reaction Hydrolysis of terminal, non-reducing alpha-D-galactose residues in alpha-D-galactosides, including galactose oligosaccharides, galactomannans and galactolipids.. In terms of biological role, hydrolyzes a variety of simple alpha-D-galactoside as well as more complex molecules such as oligosaccharides and polysaccharides. In Aspergillus oryzae (strain ATCC 42149 / RIB 40) (Yellow koji mold), this protein is Probable alpha-galactosidase B (aglB).